The chain runs to 205 residues: Small ribosomal subunit protein mS26 (205 aa).

The transit peptide at 1 to 26 directs the protein to the mitochondrion; it reads MLRALSTLGARPLGRPPAQFLLLARG.

The protein belongs to the mitochondrion-specific ribosomal protein mS26 family. Component of the mitochondrial ribosome small subunit (28S) which comprises a 12S rRNA and about 30 distinct proteins.

It is found in the mitochondrion. The sequence is that of Small ribosomal subunit protein mS26 (MRPS26) from Bos taurus (Bovine).